The sequence spans 242 residues: Myogenic factor 6 (242 aa).

Residues 31 to 63 form a disordered region; the sequence is SPLYPGSDGTLSPCQDQMPPEAGSDSSGEEHVL. One can recognise a bHLH domain in the interval 93-144; sequence DRRKAATLRERRRLKKINEAFEALKRRTVANPNQRLPKVEILRSAISYIERL.

Efficient DNA binding requires dimerization with another bHLH protein. Interacts with CSRP3. As to expression, skeletal muscle.

The protein localises to the nucleus. Involved in muscle differentiation (myogenic factor). Induces fibroblasts to differentiate into myoblasts. Probable sequence specific DNA-binding protein. The sequence is that of Myogenic factor 6 (MYF6) from Homo sapiens (Human).